The chain runs to 163 residues: Neurotrophin-3 (163 aa).

An N-terminal signal peptide occupies residues 1 to 3 (IQS). Residues 4-119 (TSMDQGILTE…VLNRTSRRKR (116 aa)) constitute a propeptide that is removed on maturation. The disordered stretch occupies residues 35 to 61 (KQTARTKDGTQTTVKKSEAEADATASQ). Asparagine 112 is a glycosylation site (N-linked (GlcNAc...) asparagine).

Belongs to the NGF-beta family.

Its subcellular location is the secreted. Seems to promote the survival of visceral and proprioceptive sensory neurons. The polypeptide is Neurotrophin-3 (NTF3) (Corallus caninus (Emerald tree boa)).